A 164-amino-acid chain; its full sequence is Ribosome maturation factor RimM (164 aa).

Residues 90–161 form the PRC barrel domain; that stretch reads KGSYFIADLI…TVTIKPLEIW (72 aa).

Belongs to the RimM family. In terms of assembly, binds ribosomal protein uS19.

Its subcellular location is the cytoplasm. An accessory protein needed during the final step in the assembly of 30S ribosomal subunit, possibly for assembly of the head region. Essential for efficient processing of 16S rRNA. May be needed both before and after RbfA during the maturation of 16S rRNA. It has affinity for free ribosomal 30S subunits but not for 70S ribosomes. The sequence is that of Ribosome maturation factor RimM from Clostridium botulinum (strain Langeland / NCTC 10281 / Type F).